The sequence spans 225 residues: Small ribosomal subunit protein mS26 (225 aa).

The protein belongs to the mitochondrion-specific ribosomal protein mS26 family. As to quaternary structure, component of the mitochondrial ribosome small subunit (28S) which comprises a 12S rRNA and about 30 distinct proteins.

Its subcellular location is the mitochondrion. The sequence is that of Small ribosomal subunit protein mS26 (mRpS26) from Drosophila melanogaster (Fruit fly).